Reading from the N-terminus, the 364-residue chain is Homeobox protein Nkx-6.1 (364 aa).

A disordered region spans residues 35–134 (LYPATYPPLP…SSSSSASATS (100 aa)). Composition is skewed to low complexity over residues 48 to 92 (PSSS…LSAA) and 109 to 134 (ASGA…SATS). Residues 101-268 (LSRPSMPVAS…KYLAGPERAR (168 aa)) are repressor domain. Asymmetric dimethylarginine is present on R189. Residues 236-295 (RKHTRPTFSGQQIFALEKTFEQTKYLAGPERARLAYSLGMTESQVKVWFQNRRTKWRKKH) constitute a DNA-binding region (homeobox). The disordered stretch occupies residues 294 to 364 (KHAAEMATAK…LHASEAEGSS (71 aa)). A compositionally biased stretch (basic and acidic residues) spans 304-317 (KKQDSETERLKGTS). Residues 306 to 364 (QDSETERLKGTSENEEEDDDYNKPLDPNSDDEKITQLLKKHKSSSGGLLLHASEAEGSS) form an involved in DNA-binding region.

As to expression, pancreatic beta cells.

The protein resides in the nucleus. Together with NKX2-2 and IRX3 acts to restrict the generation of motor neurons to the appropriate region of the neural tube. Belongs to the class II proteins of neuronal progenitor factors, which are induced by SHH signals. Transcription factor which binds to specific A/T-rich DNA sequences in the promoter regions of a number of genes. Involved in transcriptional regulation in islet beta cells. Binds to the insulin promoter and is involved in regulation of the insulin gene. The polypeptide is Homeobox protein Nkx-6.1 (NKX6-1) (Mesocricetus auratus (Golden hamster)).